The primary structure comprises 928 residues: Isoleucine--tRNA ligase (928 aa).

Residues 57–67 (PFANGNIHMGH) carry the 'HIGH' region motif. Glu552 lines the L-isoleucyl-5'-AMP pocket. Positions 593 to 597 (KMSKS) match the 'KMSKS' region motif. Lys596 serves as a coordination point for ATP. Zn(2+) contacts are provided by Cys887, Cys890, Cys907, and Cys910.

It belongs to the class-I aminoacyl-tRNA synthetase family. IleS type 1 subfamily. Monomer. The cofactor is Zn(2+).

It localises to the cytoplasm. It carries out the reaction tRNA(Ile) + L-isoleucine + ATP = L-isoleucyl-tRNA(Ile) + AMP + diphosphate. Its function is as follows. Catalyzes the attachment of isoleucine to tRNA(Ile). As IleRS can inadvertently accommodate and process structurally similar amino acids such as valine, to avoid such errors it has two additional distinct tRNA(Ile)-dependent editing activities. One activity is designated as 'pretransfer' editing and involves the hydrolysis of activated Val-AMP. The other activity is designated 'posttransfer' editing and involves deacylation of mischarged Val-tRNA(Ile). This Lacticaseibacillus paracasei (strain ATCC 334 / BCRC 17002 / CCUG 31169 / CIP 107868 / KCTC 3260 / NRRL B-441) (Lactobacillus paracasei) protein is Isoleucine--tRNA ligase.